The chain runs to 177 residues: ATP synthase subunit delta, chloroplastic (177 aa).

Belongs to the ATPase delta chain family. As to quaternary structure, F-type ATPases have 2 components, F(1) - the catalytic core - and F(0) - the membrane proton channel. F(1) has five subunits: alpha(3), beta(3), gamma(1), delta(1), epsilon(1). CF(0) has four main subunits: a(1), b(1), b'(1) and c(10-14). The alpha and beta chains form an alternating ring which encloses part of the gamma chain. F(1) is attached to F(0) by a central stalk formed by the gamma and epsilon chains, while a peripheral stalk is formed by the delta, b and b' chains.

Its subcellular location is the plastid. The protein resides in the chloroplast thylakoid membrane. In terms of biological role, f(1)F(0) ATP synthase produces ATP from ADP in the presence of a proton or sodium gradient. F-type ATPases consist of two structural domains, F(1) containing the extramembraneous catalytic core and F(0) containing the membrane proton channel, linked together by a central stalk and a peripheral stalk. During catalysis, ATP synthesis in the catalytic domain of F(1) is coupled via a rotary mechanism of the central stalk subunits to proton translocation. This protein is part of the stalk that links CF(0) to CF(1). It either transmits conformational changes from CF(0) to CF(1) or is implicated in proton conduction. The chain is ATP synthase subunit delta, chloroplastic from Galdieria sulphuraria (Red alga).